Reading from the N-terminus, the 104-residue chain is Large ribosomal subunit protein uL24 (104 aa).

The protein belongs to the universal ribosomal protein uL24 family. Part of the 50S ribosomal subunit.

One of two assembly initiator proteins, it binds directly to the 5'-end of the 23S rRNA, where it nucleates assembly of the 50S subunit. Functionally, one of the proteins that surrounds the polypeptide exit tunnel on the outside of the subunit. The polypeptide is Large ribosomal subunit protein uL24 (Clostridium botulinum (strain Eklund 17B / Type B)).